Here is a 444-residue protein sequence, read N- to C-terminus: Proline--tRNA ligase (444 aa).

The protein belongs to the class-II aminoacyl-tRNA synthetase family. ProS type 2 subfamily. In terms of assembly, homodimer.

The protein localises to the cytoplasm. The enzyme catalyses tRNA(Pro) + L-proline + ATP = L-prolyl-tRNA(Pro) + AMP + diphosphate. Its function is as follows. Catalyzes the attachment of proline to tRNA(Pro) in a two-step reaction: proline is first activated by ATP to form Pro-AMP and then transferred to the acceptor end of tRNA(Pro). In Methylobacterium sp. (strain 4-46), this protein is Proline--tRNA ligase.